Here is an 892-residue protein sequence, read N- to C-terminus: Putative VWFA domain-containing protein ORF892 (892 aa).

The disordered stretch occupies residues glutamate 109–leucine 548. Residues serine 129–asparagine 142 are compositionally biased toward polar residues. The segment covering glutamine 143 to glutamate 162 has biased composition (basic and acidic residues). Residues glutamate 169–glutamine 184 show a composition bias toward acidic residues. A compositionally biased stretch (basic and acidic residues) spans glutamate 185–glutamate 196. Positions glutamate 212–serine 223 are enriched in acidic residues. Low complexity-rich tracts occupy residues serine 224 to glutamine 238 and glycine 271 to glycine 283. Positions glycine 287 to serine 300 are enriched in acidic residues. Residues glutamate 301–serine 323 are compositionally biased toward low complexity. Composition is skewed to acidic residues over residues glutamate 324–glutamate 336 and serine 425–glutamate 448. Over residues serine 453–glutamine 466 the composition is skewed to low complexity. 2 stretches are compositionally biased toward polar residues: residues proline 467–arginine 481 and glutamine 512–glutamate 531. Residues glutamate 536–glutamate 546 show a composition bias toward basic and acidic residues. A coiled-coil region spans residues glutamine 553–valine 620. The VWFA domain maps to aspartate 723–histidine 892.

The protein is Putative VWFA domain-containing protein ORF892 of Acidianus two-tailed virus (ATV).